Consider the following 135-residue polypeptide: ATP synthase epsilon chain (135 aa).

The protein belongs to the ATPase epsilon chain family. F-type ATPases have 2 components, CF(1) - the catalytic core - and CF(0) - the membrane proton channel. CF(1) has five subunits: alpha(3), beta(3), gamma(1), delta(1), epsilon(1). CF(0) has three main subunits: a, b and c.

It localises to the cell inner membrane. In terms of biological role, produces ATP from ADP in the presence of a proton gradient across the membrane. In Rhodopseudomonas palustris (strain ATCC BAA-98 / CGA009), this protein is ATP synthase epsilon chain.